Reading from the N-terminus, the 236-residue chain is 5'-methylthioadenosine/S-adenosylhomocysteine nucleosidase (236 aa).

Catalysis depends on E12, which acts as the Proton acceptor. Substrate-binding positions include G78, I153, and 174 to 175 (ME). D198 (proton donor) is an active-site residue.

It belongs to the PNP/UDP phosphorylase family. MtnN subfamily.

It carries out the reaction S-adenosyl-L-homocysteine + H2O = S-(5-deoxy-D-ribos-5-yl)-L-homocysteine + adenine. The enzyme catalyses S-methyl-5'-thioadenosine + H2O = 5-(methylsulfanyl)-D-ribose + adenine. The catalysed reaction is 5'-deoxyadenosine + H2O = 5-deoxy-D-ribose + adenine. Its pathway is amino-acid biosynthesis; L-methionine biosynthesis via salvage pathway; S-methyl-5-thio-alpha-D-ribose 1-phosphate from S-methyl-5'-thioadenosine (hydrolase route): step 1/2. Catalyzes the irreversible cleavage of the glycosidic bond in both 5'-methylthioadenosine (MTA) and S-adenosylhomocysteine (SAH/AdoHcy) to adenine and the corresponding thioribose, 5'-methylthioribose and S-ribosylhomocysteine, respectively. Also cleaves 5'-deoxyadenosine, a toxic by-product of radical S-adenosylmethionine (SAM) enzymes, into 5-deoxyribose and adenine. The sequence is that of 5'-methylthioadenosine/S-adenosylhomocysteine nucleosidase from Shewanella oneidensis (strain ATCC 700550 / JCM 31522 / CIP 106686 / LMG 19005 / NCIMB 14063 / MR-1).